Consider the following 576-residue polypeptide: Interleukin-1 receptor type 1 (576 aa).

The first 19 residues, 1–19 (MENMKVLLGLICLMVPLLS), serve as a signal peptide directing secretion. At 20–338 (LEIDVCTEYP…QLIYPVPDFK (319 aa)) the chain is on the extracellular side. Intrachain disulfides connect cysteine 25/cysteine 107, cysteine 46/cysteine 99, and cysteine 145/cysteine 199. Ig-like C2-type domains are found at residues 25 to 115 (CTEY…VTVT), 121 to 213 (PGLC…YPVT), and 229 to 329 (PVIL…AHVQ). 7 N-linked (GlcNAc...) asparagine glycosylation sites follow: asparagine 63, asparagine 103, asparagine 174, asparagine 236, asparagine 252, asparagine 266, and asparagine 300. An intrachain disulfide couples cysteine 251 to cysteine 315. Residues 339–359 (NYLIGGFIILTATIVCCVCIY) traverse the membrane as a helical segment. Over 360-576 (KVFKVDIVLW…LPAATHLPLG (217 aa)) the chain is Cytoplasmic. The 156-residue stretch at 386–541 (KTYDAYILYP…RFWKNLRYQM (156 aa)) folds into the TIR domain. Glutamate 473 is a catalytic residue. Tyrosine 499 is subject to Phosphotyrosine. Threonine 556 is modified (phosphothreonine; by PKC).

The protein belongs to the interleukin-1 receptor family. As to quaternary structure, the interleukin-1 receptor complex is a heterodimer of IL1R1 and IL1RAP. Interacts with PIK3R1. Interacts with IL1A. Post-translationally, a soluble form (sIL1R1) is probably produced by proteolytic cleavage at the cell surface (shedding). In terms of processing, rapidly phosphorylated on Tyr-499 in response to IL-1, which creates a SH2 binding site for the PI 3-kinase regulatory subunit PIK3R1. Isoform 2 is expressed in various brain tissues.

Its subcellular location is the membrane. The protein localises to the cell membrane. The protein resides in the secreted. It catalyses the reaction NAD(+) + H2O = ADP-D-ribose + nicotinamide + H(+). In terms of biological role, receptor for IL1A, IL1B and IL1RN. After binding to interleukin-1 associates with the coreceptor IL1RAP to form the high affinity interleukin-1 receptor complex which mediates interleukin-1-dependent activation of NF-kappa-B, MAPK and other pathways. Signaling involves the recruitment of adapter molecules such as TOLLIP, MYD88, and IRAK1 or IRAK2 via the respective TIR domains of the receptor/coreceptor subunits. Binds ligands with comparable affinity and binding of antagonist IL1RN prevents association with IL1RAP to form a signaling complex. Involved in IL1B-mediated costimulation of IFNG production from T-helper 1 (Th1) cells. Functionally, unable to mediate canonical IL-1 signaling. Cooperates with IL1RAP isoform 3 to mediate IL1B-induced neuronal activity including IL1B-potentiated NMDA-induced calcium influx mediated by Akt kinase activation. In Mus musculus (Mouse), this protein is Interleukin-1 receptor type 1 (Il1r1).